The primary structure comprises 236 residues: Dense granule protein 7 (236 aa).

Residues 1 to 26 (MARHAIFSALCVLGLVAAALPQFATA) form the signal peptide. Residues 45–106 (DGQAPVDSLR…EVHFRKRGVR (62 aa)) are disordered. Polar residues predominate over residues 70-80 (TTSMDKASVES). The tract at residues 147–236 (AVGMGASYFA…SGEDGEDARQ (90 aa)) is required for dimerization, interactions with liposomes and liposome tubulation. A helical membrane pass occupies residues 181-201 (VGTVLGFAALAAAAAFLGMGL). The segment at 208–236 (FSPRKNRSRQPALEQEVPESGEDGEDARQ) is disordered. Asparagine 213 is a glycosylation site (N-linked (GlcNAc...) asparagine). The segment covering 223 to 236 (EVPESGEDGEDARQ) has biased composition (acidic residues).

The protein belongs to the Gra7 family. Homodimer. Can form higher order homooligomers in a lipid-stimulated manner. Component of a complex at least composed of ROP18, GRA7 and ROP2. Interacts with ROP5. Interacts with ROP18 in the absence of ROP5. Interacts with mouse IRGA6/IIGP1 in GTP-dependent manner; the interaction results in faster turnover of the GTP-activated IRGA6/IIGP1 oligomer. Interacts with mouse TRAF6 (via N-terminal RING domain); the interaction plays a role in GRA7-induced pro-inflammatory cytokine production in mouse macrophages.

Its subcellular location is the secreted. The protein localises to the parasitophorous vacuole lumen. The protein resides in the parasitophorous vacuole membrane. It is found in the cytoplasm. It localises to the host cytoplasm. Its subcellular location is the cytoplasmic vesicle. The protein localises to the secretory vesicle. Its function is as follows. Binds lipid bilayers, sequesters host endocytic organelles in the parasitophorous vacuole space, and causes their deformation and remodeling. Plays a role in nutrient acquisition from the host. In complex with ROP18, targets immunity-related GTPases (IRGs) to prevent IRG-mediated parasite killing by mouse cells. Important component within a kinase complex, contributing to phosphorylation of mouse IRGA6/IIGP1, an immunity-related GTPase that protects mice from infection by certain intracellular pathogens, by Toxoplasma gondii ROP5 and ROP18. Induces pro-inflammatory cytokine production in host macrophages. Activates host pro-inflammatory signaling pathways in a MyD88-dependent manner. Triggers generation of reactive oxygen species (ROS) in host cells. Activates MAPK pathway in host cells. Activates host NF-kappa-B signaling pathway by interacting with TRAF6 and modulating the 'Lys-63'-linked polyubiquitination of TRAF6. The polypeptide is Dense granule protein 7 (Toxoplasma gondii).